Consider the following 322-residue polypeptide: Probable cAMP-dependent protein kinase catalytic subunit (322 aa).

In terms of domain architecture, Protein kinase spans 7–261 (FEFVKVVGVG…ICEIMGHPFF (255 aa)). Residues 13–21 (VGVGAFGKV) and K37 each bind ATP. D132 serves as the catalytic Proton acceptor. Positions 262–322 (KGIDWHEVES…KHLYKVSKGL (61 aa)) constitute an AGC-kinase C-terminal domain.

Belongs to the protein kinase superfamily. AGC Ser/Thr protein kinase family. cAMP subfamily.

It carries out the reaction L-seryl-[protein] + ATP = O-phospho-L-seryl-[protein] + ADP + H(+). The catalysed reaction is L-threonyl-[protein] + ATP = O-phospho-L-threonyl-[protein] + ADP + H(+). This Encephalitozoon cuniculi (strain GB-M1) (Microsporidian parasite) protein is Probable cAMP-dependent protein kinase catalytic subunit.